Here is a 179-residue protein sequence, read N- to C-terminus: Large ribosomal subunit protein uL6 (179 aa).

Belongs to the universal ribosomal protein uL6 family. As to quaternary structure, part of the 50S ribosomal subunit.

Its function is as follows. This protein binds to the 23S rRNA, and is important in its secondary structure. It is located near the subunit interface in the base of the L7/L12 stalk, and near the tRNA binding site of the peptidyltransferase center. The protein is Large ribosomal subunit protein uL6 of Bacillus subtilis (strain 168).